Here is a 105-residue protein sequence, read N- to C-terminus: Large ribosomal subunit protein uL24 (105 aa).

Belongs to the universal ribosomal protein uL24 family. As to quaternary structure, part of the 50S ribosomal subunit.

Its function is as follows. One of two assembly initiator proteins, it binds directly to the 5'-end of the 23S rRNA, where it nucleates assembly of the 50S subunit. Functionally, one of the proteins that surrounds the polypeptide exit tunnel on the outside of the subunit. This is Large ribosomal subunit protein uL24 from Rhodospirillum centenum (strain ATCC 51521 / SW).